A 236-amino-acid polypeptide reads, in one-letter code: UPF0257 lipoprotein YnfC (236 aa).

Positions 1 to 16 (MKYKLLPCLLAILLTG) are cleaved as a signal peptide. The N-palmitoyl cysteine moiety is linked to residue C17. The S-diacylglycerol cysteine moiety is linked to residue C17.

Belongs to the UPF0257 family.

Its subcellular location is the cell membrane. This Escherichia coli O81 (strain ED1a) protein is UPF0257 lipoprotein YnfC.